The sequence spans 604 residues: Threonine--tRNA ligase (604 aa).

A catalytic region spans residues 209-500 (DHRKLGQEMG…LTEHFGGEFP (292 aa)). Zn(2+) is bound by residues C301, H352, and H477.

It belongs to the class-II aminoacyl-tRNA synthetase family. As to quaternary structure, homodimer. The cofactor is Zn(2+).

The protein resides in the cytoplasm. The catalysed reaction is tRNA(Thr) + L-threonine + ATP = L-threonyl-tRNA(Thr) + AMP + diphosphate + H(+). In terms of biological role, catalyzes the attachment of threonine to tRNA(Thr) in a two-step reaction: L-threonine is first activated by ATP to form Thr-AMP and then transferred to the acceptor end of tRNA(Thr). Also edits incorrectly charged L-seryl-tRNA(Thr). The polypeptide is Threonine--tRNA ligase (Helicobacter hepaticus (strain ATCC 51449 / 3B1)).